Consider the following 410-residue polypeptide: Serine hydroxymethyltransferase (410 aa).

(6S)-5,6,7,8-tetrahydrofolate is bound by residues Leu-119 and 123–125 (GHL). Lys-228 carries the N6-(pyridoxal phosphate)lysine modification. (6S)-5,6,7,8-tetrahydrofolate is bound at residue 351–353 (SPF).

This sequence belongs to the SHMT family. In terms of assembly, homodimer. Requires pyridoxal 5'-phosphate as cofactor.

The protein localises to the cytoplasm. The catalysed reaction is (6R)-5,10-methylene-5,6,7,8-tetrahydrofolate + glycine + H2O = (6S)-5,6,7,8-tetrahydrofolate + L-serine. Its pathway is one-carbon metabolism; tetrahydrofolate interconversion. It participates in amino-acid biosynthesis; glycine biosynthesis; glycine from L-serine: step 1/1. Its function is as follows. Catalyzes the reversible interconversion of serine and glycine with tetrahydrofolate (THF) serving as the one-carbon carrier. This reaction serves as the major source of one-carbon groups required for the biosynthesis of purines, thymidylate, methionine, and other important biomolecules. Also exhibits THF-independent aldolase activity toward beta-hydroxyamino acids, producing glycine and aldehydes, via a retro-aldol mechanism. The polypeptide is Serine hydroxymethyltransferase (Alkaliphilus metalliredigens (strain QYMF)).